The primary structure comprises 428 residues: A-kinase anchor protein 5 (428 aa).

The segment at 1–170 (MEITVSEIQV…VTKTQTQSDD (170 aa)) is essential to the intracellular anchoring function. Disordered regions lie at residues 1 to 207 (MEIT…SPGE) and 237 to 313 (LEEK…TELS). Residues 10–32 (VESKDETRSAEVRPQDERQEEKA) show a composition bias toward basic and acidic residues. Residue C36 is the site of S-palmitoyl cysteine attachment. The segment covering 37–48 (FKRRKKAAKAMK) has biased composition (basic residues). Residues 57 to 68 (DAAKKCPPEARA) are compositionally biased toward basic and acidic residues. An AKAP CaM-binding motif is present at residues 76-96 (GGAWDSIKRLVTRRKRSESSK). A Phosphothreonine; by PKC modification is found at T87. Position 92 is a phosphoserine; by PKA (S92). Residue S94 is modified to Phosphoserine; by PKC. The S-palmitoyl cysteine moiety is linked to residue C129. Positions 133-156 (SKGEKRSNHSKIIEDSDRSVKVQE) are enriched in basic and acidic residues. Residues 161–170 (VTKTQTQSDD) show a composition bias toward polar residues. 2 stretches are compositionally biased toward basic and acidic residues: residues 171–191 (QATK…KGDD) and 290–311 (PDWK…KDTE). Residues 389 to 410 (YETLLIETASSLVKNAIQLSIE) are RII-beta subunit binding domain. The tethers NFATC2 to CRAC channels stretch occupies residues 411–428 (QLVNEMASDDNTINNRLQ).

Binding protein for dimer of the RII-beta regulatory subunit of cAMP-dependent protein kinase (PKA) and also for the protein kinase C (PKC) and the phosphatase calcineurin (PP2B). Each enzyme is inhibited when bound to the anchoring protein. Also binds the beta2-adrenergic receptor. Part of a complex containing AKAP5, ADCY5, ADCY6 and PDE4C. Interacts with ADCY8, and enhances its phosphorylation at lipid rafts. Interacts with ORAI1 (isoform alpha) (via N-terminus) upon store depletion and in response to LTC4. Does not interact with ORAI2 and ORAI3 paralogs. Interacts (via leucine zipper domain) with NFATC2/NFAT1. Interacts with calmodulin; the interaction is calcium-independent. Interacts with KCNQ2; the interaction may help KCNQ2 channel complex to retain calcium-bound calmodulin. Palmitoylated. Palmitoylation at Cys-36 and Cys-129 play a key role in the targeting of AKAP5 to lipid rafts. Palmitoylation by ZDHHC2 is required for AKAP5 function in LTP-stimulated recycling endosome exocytosis. As to expression, predominantly in brain, and to a lesser extent in adrenal medulla, lung and anterior pituitary.

The protein resides in the postsynaptic recycling endosome membrane. Functionally, multivalent scaffold protein that anchors the cAMP-dependent protein kinase/PKA to cytoskeletal and/or organelle-associated proteins, targeting the signal carried by cAMP to specific intracellular effectors. Association with the beta2-adrenergic receptor (beta2-AR) not only regulates beta2-AR signaling pathway, but also the activation by PKA by switching off the beta2-AR signaling cascade. Plays a role in long term synaptic potentiation by regulating protein trafficking from the dendritic recycling endosomes to the plasma membrane and controlling both structural and functional plasticity at excitatory synapses. Associates with ORAI1 pore-forming subunit of CRAC channels in Ca(2+) signaling microdomains where it recruits NFATC2/NFAT1 and couples store-operated Ca(2+) influx to calmodulin and calcineurin signaling and activation of NFAT-dependent transcriptional responses. The protein is A-kinase anchor protein 5 (AKAP5) of Bos taurus (Bovine).